The primary structure comprises 300 residues: Transmembrane protein 158 (300 aa).

Residues 1 to 20 (MLPLLAALLAAACPLPPVRG) form the signal peptide. A glycan (N-linked (GlcNAc...) asparagine) is linked at N75. 2 helical membrane passes run 231-251 (LVIVVWSVAALIWPVPIIAGF) and 273-293 (VPAGTTAAAAAAAAAAAAAAV).

It belongs to the TMEM158 family. Post-translationally, N-glycosylated.

It is found in the membrane. Receptor for brain injury-derived neurotrophic peptide (BINP), a synthetic 13-mer peptide. This Homo sapiens (Human) protein is Transmembrane protein 158 (TMEM158).